A 139-amino-acid chain; its full sequence is Aspartate 1-decarboxylase (139 aa).

Residue S25 is the Schiff-base intermediate with substrate; via pyruvic acid of the active site. Pyruvic acid (Ser) is present on S25. T57 provides a ligand contact to substrate. Residue Y58 is the Proton donor of the active site. 73-75 (GAA) is a binding site for substrate. Residues 117 to 139 (TGSDPADAPAGSGLLRGDRPAGR) are disordered.

The protein belongs to the PanD family. In terms of assembly, heterooctamer of four alpha and four beta subunits. Requires pyruvate as cofactor. Post-translationally, is synthesized initially as an inactive proenzyme, which is activated by self-cleavage at a specific serine bond to produce a beta-subunit with a hydroxyl group at its C-terminus and an alpha-subunit with a pyruvoyl group at its N-terminus.

The protein resides in the cytoplasm. It catalyses the reaction L-aspartate + H(+) = beta-alanine + CO2. The protein operates within cofactor biosynthesis; (R)-pantothenate biosynthesis; beta-alanine from L-aspartate: step 1/1. Catalyzes the pyruvoyl-dependent decarboxylation of aspartate to produce beta-alanine. This chain is Aspartate 1-decarboxylase, found in Nocardioides sp. (strain ATCC BAA-499 / JS614).